A 178-amino-acid polypeptide reads, in one-letter code: PEST proteolytic signal-containing nuclear protein (178 aa).

Basic and acidic residues predominate over residues 1–15 (MADGKAGEEKPEKSQ). Positions 1 to 84 (MADGKAGEEK…IGSQTTKKAS (84 aa)) are disordered. The residue at position 2 (Ala-2) is an N-acetylalanine. The segment covering 37–47 (SSSNGGESSSR) has biased composition (low complexity). Ser-53 carries the phosphoserine modification. Lys-64 is subject to N6-acetyllysine. 3 positions are modified to phosphoserine: Ser-77, Ser-87, and Ser-119. A disordered region spans residues 134 to 178 (NIGRDTPTSAGPNSFNKGKHGFSDNQKLWERNIKSHLGNVHDQDN). Thr-139 carries the post-translational modification Phosphothreonine. The span at 139–149 (TPTSAGPNSFN) shows a compositional bias: polar residues. The residue at position 147 (Ser-147) is a Phosphoserine. 2 positions are modified to N6-acetyllysine: Lys-150 and Lys-152. The segment covering 160 to 178 (KLWERNIKSHLGNVHDQDN) has biased composition (basic and acidic residues).

In terms of assembly, interacts with UHRF2/NIRF. Post-translationally, ubiquitinated; mediated by UHRF2 and leading to its subsequent proteasomal degradation. In terms of processing, N-terminally acetylated in a HYPK-dependent manner by the NatA acetyltransferase complex which is composed of NAA10 and NAA15.

Its subcellular location is the nucleus. May be involved in cell cycle regulation. In Pongo abelii (Sumatran orangutan), this protein is PEST proteolytic signal-containing nuclear protein (PCNP).